Consider the following 146-residue polypeptide: Cytochrome b5 type B (146 aa).

The propeptide occupies 1 to 11 (MATPEASGSGR). A Cytochrome b5 heme-binding domain is found at 20–96 (VTYYRLEEVA…LKQYYIGDVH (77 aa)). Position 30 is an N6-acetyllysine (K30). Heme-binding residues include H55 and H79. The residue at position 80 (S80) is a Phosphoserine. The chain crosses the membrane as a helical span at residues 119–136 (WAYWIVPIVGAILIGFLY).

This sequence belongs to the cytochrome b5 family. In terms of assembly, component of a complex composed of cytochrome b5, NADH-cytochrome b5 reductase (CYB5R3) and MTARC2.

The protein localises to the mitochondrion outer membrane. Its function is as follows. Cytochrome b5 is a membrane-bound hemoprotein functioning as an electron carrier for several membrane-bound oxygenases. This Rattus norvegicus (Rat) protein is Cytochrome b5 type B (Cyb5b).